The primary structure comprises 214 residues: UPF0725 protein At1g19565 (214 aa).

The tract at residues 56–92 (EEEYEPSLPSSESPTDSCHADHESPDSPKYQQPAPGE) is disordered.

Belongs to the UPF0725 (EMB2204) family.

The protein is UPF0725 protein At1g19565 of Arabidopsis thaliana (Mouse-ear cress).